Here is a 453-residue protein sequence, read N- to C-terminus: Secreted exoenzyme S (453 aa).

In terms of domain architecture, Bacterial Rho-GAP spans 96–229 (SSAVVFKQMV…LRQAVESEVS (134 aa)). Residues 239-414 (DGLVKRFGAD…RVLEEAALGE (176 aa)) form the TR mART core domain. Active-site residues include arginine 319, serine 343, and glutamate 381.

Its subcellular location is the secreted. It carries out the reaction L-arginyl-[protein] + NAD(+) = N(omega)-(ADP-D-ribosyl)-L-arginyl-[protein] + nicotinamide + H(+). Functionally, bifunctional effector protein that is secreted and delivered by the type III secretion system into eukaryotic target cells. ADP-ribosylates several eukaryotic proteins including ezrin/radixin/moesin (ERM), cyclophilin A and several members of the Ras superfamily. Host Ras ADP-ribosylation blocks its activation by its guanine nucleotide exchange factor, thereby interfering with Ras-mediated signal transduction. For instance, prevents Ras from interacting with and activating phosphoinositol-3-kinase (PI3K), which is required to stimulate the phagocytic NADPH-oxidase that generates reactive oxygen species. The TR mART core domain also contributes to bacterial dissemination to the blood during pneumonia. In addition to this activity, acts via its N-terminal region as a GTPase-activating protein (GAP) for host Rho GTPases including RhoA, Rac1, Cdc42 and Ras. The bacterial Rho-GAP domain activity induces mitochondrial disruption in the target host cell by activating host caspases 3 and 9 that execute cellular death. This Pseudomonas aeruginosa (strain ATCC 15692 / DSM 22644 / CIP 104116 / JCM 14847 / LMG 12228 / 1C / PRS 101 / PAO1) protein is Secreted exoenzyme S (exoS).